The following is a 757-amino-acid chain: MDVNPTLLFLKVPAQNAISTTFPYTGDPPYSHGTGTGYTMDTVNRTHQYSERGRWTKNTETGAPQLNPIDGPLPKDNEPSGYAQTDCVLEAMAFLEESHPGIFENSCIETMEVVQQTRVDKLTQGRQTYDWTLNRNQPAATALANTIEVFRSNGLMANESGRLIDFLKDVMDSMDREEMEITTHFQRKRRVRDNVTKKMVTQRTIGKKKHRLNKRSYLIRALTLNTMTKDAERGKLKRRAIATPGMQIRGFVYFVETLARSICEKLEQSGLPVGGNEKKAKLANVVRKMMTNSQDTEISFTITGDNTKWNENQNPRMFLAMITYITRNQPEWFRNILSIAPIMFSNKMARLGKGYMFESKSMKLRTQIPAEMLANIDLRYFNDSTRKKIEKIRPLLIDGTASLSPGMMMGMFNMLSTVLGVSILNLGQKRYTKTTYWWDGLQSSDDFALIVNAPNYAGIQAGVDRFYRTCKLLGINMSKKKSYINRTGTFEFTSFFYRYGFVANFSMELPSFGVSGINESADMSIGVTVIKNNMINNDLGPATAQMALQLFIKDYRYTYRCHRGDTQIQTRRSFEIKKLWDQTRSKTGLLVSDGGPNLYNIRNLHIPEVCLKWDLMDEDYQGRLCNPLNPFVSHKEIESVNNAVMMPAHGPAKIMEYDAVATTHSWVPKRNRSILNTSQRGILEDEQMYQRCCNLFEKFFPSSSYRRPVGISSMVEAMISRARIDARIDFESGRIKKEEFTEIMKTCSTIEELRRQK.

The interval Gly-53–Tyr-82 is disordered. 2 short sequence motifs (nuclear localization signal) span residues Arg-187–Val-195 and Arg-203–Ser-216. The tract at residues Arg-249 to Glu-256 is promoter-binding site. In terms of domain architecture, RdRp catalytic spans Val-286 to Tyr-483.

This sequence belongs to the influenza viruses polymerase PB1 family. Influenza RNA polymerase is composed of three subunits: PB1, PB2 and PA. Interacts (via N-terminus) with PA (via C-terminus). Interacts (via C-terminus) with PB2 (via N-terminus); this interaction is essential for transcription initiation. Interacts (via C-terminus) with human PKP2 (via N-terminus); the interaction competitively inhibits the interaction between the RNA polymerase subunits PB1 and PB2. Post-translationally, phosphorylated by host PRKCA.

It localises to the host nucleus. It is found in the host cytoplasm. It catalyses the reaction RNA(n) + a ribonucleoside 5'-triphosphate = RNA(n+1) + diphosphate. RNA-dependent RNA polymerase which is responsible for replication and transcription of virus RNA segments. The transcription of viral mRNAs occurs by a unique mechanism called cap-snatching. 5' methylated caps of cellular mRNAs are cleaved after 10-13 nucleotides by PA. In turn, these short capped RNAs are used as primers by PB1 for transcription of viral mRNAs. During virus replication, PB1 initiates RNA synthesis and copy vRNA into complementary RNA (cRNA) which in turn serves as a template for the production of more vRNAs. This chain is RNA-directed RNA polymerase catalytic subunit, found in Aves (Human).